Consider the following 397-residue polypeptide: Ribosomal RNA large subunit methyltransferase I (397 aa).

The PUA domain occupies 2–81 (SAQVILQPSR…ESIDNGFFLR (80 aa)).

Belongs to the methyltransferase superfamily. RlmI family.

The protein localises to the cytoplasm. The enzyme catalyses cytidine(1962) in 23S rRNA + S-adenosyl-L-methionine = 5-methylcytidine(1962) in 23S rRNA + S-adenosyl-L-homocysteine + H(+). Functionally, specifically methylates the cytosine at position 1962 (m5C1962) of 23S rRNA. In Alteromonas mediterranea (strain DSM 17117 / CIP 110805 / LMG 28347 / Deep ecotype), this protein is Ribosomal RNA large subunit methyltransferase I.